Consider the following 433-residue polypeptide: Enolase (433 aa).

Residue Q167 participates in (2R)-2-phosphoglycerate binding. E209 serves as the catalytic Proton donor. Mg(2+) is bound by residues D246, E291, and D318. Residues K343, R372, S373, and K394 each contribute to the (2R)-2-phosphoglycerate site. The active-site Proton acceptor is the K343.

The protein belongs to the enolase family. In terms of assembly, component of the RNA degradosome, a multiprotein complex involved in RNA processing and mRNA degradation. Mg(2+) is required as a cofactor.

The protein localises to the cytoplasm. It localises to the secreted. It is found in the cell surface. The catalysed reaction is (2R)-2-phosphoglycerate = phosphoenolpyruvate + H2O. The protein operates within carbohydrate degradation; glycolysis; pyruvate from D-glyceraldehyde 3-phosphate: step 4/5. Functionally, catalyzes the reversible conversion of 2-phosphoglycerate (2-PG) into phosphoenolpyruvate (PEP). It is essential for the degradation of carbohydrates via glycolysis. In Edwardsiella ictaluri (strain 93-146), this protein is Enolase.